Consider the following 265-residue polypeptide: uncharacterized protein (265 aa).

The segment at 1-160 is disordered; the sequence is MDKSKNLFDL…STEPVVAAPV (160 aa). The segment covering 28–42 has biased composition (low complexity); it reads AAAAPVAAKKPVAPK. 2 stretches are compositionally biased toward basic and acidic residues: residues 73–85 and 102–119; these read SEERQNTKRDSKS and RQFDRKSGTGRPHNENKK.

Belongs to the SERBP1-HABP4 family.

Functionally, ribosome-binding protein that acts as a regulator of mRNA translation by promoting ribosome inactivation. This is an uncharacterized protein from Dictyostelium discoideum (Social amoeba).